Consider the following 481-residue polypeptide: Abietadienol/abietadienal oxidase (481 aa).

The chain crosses the membrane as a helical span at residues 2–22 (ADQISLLLVVFTAAVALLHLI). Residue cysteine 430 coordinates heme.

This sequence belongs to the cytochrome P450 family. Requires heme as cofactor. Expressed in young tissues such as flushing buds and green bark tissues. Lower levels in mature needles and bark.

It is found in the membrane. The catalysed reaction is abieta-7,13-dien-18-ol + 2 reduced [NADPH--hemoprotein reductase] + 2 O2 = abieta-7,13-dien-18-oate + 2 oxidized [NADPH--hemoprotein reductase] + 3 H2O + 3 H(+). Functionally, multifunctional and multisubstrate cytochrome P450 that oxidizes the respective carbon 18 of abietadienol, abietadienal, levopimaradienol, isopimara-7,15-dienol, isopimara-7,15-dienal, dehydroabietadienol, and dehydroabietadienal. The chain is Abietadienol/abietadienal oxidase (CYP720B1) from Pinus taeda (Loblolly pine).